The sequence spans 98 residues: NADH-ubiquinone oxidoreductase chain 4L (98 aa).

3 helical membrane passes run 1–21, 29–49, and 61–81; these read MSLVHMNIGLAFTVAFLGLLM, SLLCLEGMMLTLFIMSSIMVL, and IILLVFAACEAAVGLSLLVMV.

It belongs to the complex I subunit 4L family. In terms of assembly, core subunit of respiratory chain NADH dehydrogenase (Complex I) which is composed of 45 different subunits.

It is found in the mitochondrion inner membrane. The catalysed reaction is a ubiquinone + NADH + 5 H(+)(in) = a ubiquinol + NAD(+) + 4 H(+)(out). In terms of biological role, core subunit of the mitochondrial membrane respiratory chain NADH dehydrogenase (Complex I) which catalyzes electron transfer from NADH through the respiratory chain, using ubiquinone as an electron acceptor. Part of the enzyme membrane arm which is embedded in the lipid bilayer and involved in proton translocation. This is NADH-ubiquinone oxidoreductase chain 4L (MT-ND4L) from Pseudosoriculus fumidus (Taiwanese brown-toothed shrew).